We begin with the raw amino-acid sequence, 256 residues long: Imidazole glycerol phosphate synthase subunit HisF (256 aa).

Residues aspartate 11 and aspartate 130 contribute to the active site.

The protein belongs to the HisA/HisF family. In terms of assembly, heterodimer of HisH and HisF.

It is found in the cytoplasm. The catalysed reaction is 5-[(5-phospho-1-deoxy-D-ribulos-1-ylimino)methylamino]-1-(5-phospho-beta-D-ribosyl)imidazole-4-carboxamide + L-glutamine = D-erythro-1-(imidazol-4-yl)glycerol 3-phosphate + 5-amino-1-(5-phospho-beta-D-ribosyl)imidazole-4-carboxamide + L-glutamate + H(+). It participates in amino-acid biosynthesis; L-histidine biosynthesis; L-histidine from 5-phospho-alpha-D-ribose 1-diphosphate: step 5/9. IGPS catalyzes the conversion of PRFAR and glutamine to IGP, AICAR and glutamate. The HisF subunit catalyzes the cyclization activity that produces IGP and AICAR from PRFAR using the ammonia provided by the HisH subunit. This Synechococcus sp. (strain CC9605) protein is Imidazole glycerol phosphate synthase subunit HisF.